The sequence spans 458 residues: Morphogenetic regulator of filamentous growth protein 1 (458 aa).

The interval 401–458 (KKDSGSEPLHAKRRRNSGISPRTTTLGPNGNSNTSNEELPTSDVNDINKDMTKKKMKF) is disordered. Over residues 417-445 (SGISPRTTTLGPNGNSNTSNEELPTSDVN) the composition is skewed to polar residues. The segment covering 446 to 458 (DINKDMTKKKMKF) has biased composition (basic and acidic residues).

The protein belongs to the MFG1 family. In terms of assembly, interacts with FLO8 and MSS11, both morphogenetic transcription factors binding directly to the FLO11 promoter.

Its subcellular location is the nucleus. Transcriptional regulator with a general role in all morphogenetically distinct forms of filamentous growth, namely haploid invasive growth, biofilm formation, and diploid pseudohyphal growth. May control FLO11 gene expression as part of a promoter-bound complex with FLO8 and MSS1. This chain is Morphogenetic regulator of filamentous growth protein 1 (MFG1), found in Saccharomyces cerevisiae (strain ATCC 204508 / S288c) (Baker's yeast).